Reading from the N-terminus, the 70-residue chain is Alpha-toxin Bot9 (70 aa).

Residues 6-69 (RDGYIVYPNN…PIKDPSYKCY (64 aa)) enclose the LCN-type CS-alpha/beta domain. 4 disulfide bridges follow: Cys-16/Cys-68, Cys-20/Cys-40, Cys-26/Cys-50, and Cys-30/Cys-52.

Belongs to the long (4 C-C) scorpion toxin superfamily. Sodium channel inhibitor family. Alpha subfamily. As to expression, expressed by the venom gland.

It localises to the secreted. Alpha toxins bind voltage-independently at site-3 of sodium channels (Nav) and inhibit the inactivation of the activated channels, thereby blocking neuronal transmission. This toxin is active against rat Nav1.2/SCN2A and B.germanica Nav1. This is Alpha-toxin Bot9 from Buthus occitanus tunetanus (Common European scorpion).